Here is a 487-residue protein sequence, read N- to C-terminus: Putative KilA-N domain-containing protein L37 (487 aa).

Basic residues predominate over residues 1–12 (MKVQKSSKKPLK). The tract at residues 1–137 (MKVQKSSKKP…DINSDDDNNL (137 aa)) is disordered. The segment covering 22-34 (KSGSKSMKSSKSS) has biased composition (low complexity). Composition is skewed to acidic residues over residues 47–77 (DSEI…ESSD) and 111–136 (VLDD…DDNN). The KilA-N domain maps to 175 to 284 (EISKGIYGTF…HKVSKIVNDY (110 aa)). A coiled-coil region spans residues 290 to 338 (FDKHEQLIKGKDDKIAELTRKIDKQTSLMKDQKSTIKEQDKKINELLSK).

This Acanthamoeba polyphaga mimivirus (APMV) protein is Putative KilA-N domain-containing protein L37.